A 350-amino-acid polypeptide reads, in one-letter code: Dihydroorotase (350 aa).

Residues His17 and His19 each coordinate Zn(2+). Residues 19–21 (HLR) and Asn45 each bind substrate. The Zn(2+) site is built by Lys103, His140, and His178. N6-carboxylysine is present on Lys103. His140 lines the substrate pocket. Leu224 contributes to the substrate binding site. Zn(2+) is bound at residue Asp252. The active site involves Asp252. 2 residues coordinate substrate: His256 and Ala268.

Belongs to the metallo-dependent hydrolases superfamily. DHOase family. Class II DHOase subfamily. Homodimer. Requires Zn(2+) as cofactor.

It carries out the reaction (S)-dihydroorotate + H2O = N-carbamoyl-L-aspartate + H(+). Its pathway is pyrimidine metabolism; UMP biosynthesis via de novo pathway; (S)-dihydroorotate from bicarbonate: step 3/3. Its function is as follows. Catalyzes the reversible cyclization of carbamoyl aspartate to dihydroorotate. This is Dihydroorotase from Buchnera aphidicola subsp. Acyrthosiphon pisum (strain 5A).